Here is a 60-residue protein sequence, read N- to C-terminus: Large ribosomal subunit protein uL30 (60 aa).

It belongs to the universal ribosomal protein uL30 family. In terms of assembly, part of the 50S ribosomal subunit.

The chain is Large ribosomal subunit protein uL30 from Shewanella woodyi (strain ATCC 51908 / MS32).